We begin with the raw amino-acid sequence, 211 residues long: Large ribosomal subunit protein uL3 (211 aa).

The tract at residues 116–142 (GTSGVMKKHGFSGNRASHGVSRNHRLG) is disordered.

This sequence belongs to the universal ribosomal protein uL3 family. As to quaternary structure, part of the 50S ribosomal subunit. Forms a cluster with proteins L14 and L19.

Functionally, one of the primary rRNA binding proteins, it binds directly near the 3'-end of the 23S rRNA, where it nucleates assembly of the 50S subunit. This Fusobacterium nucleatum subsp. nucleatum (strain ATCC 25586 / DSM 15643 / BCRC 10681 / CIP 101130 / JCM 8532 / KCTC 2640 / LMG 13131 / VPI 4355) protein is Large ribosomal subunit protein uL3.